The sequence spans 361 residues: Aurora kinase B-A (361 aa).

Residues 93–343 (FDIGRPLGKG…LKGVMEHPWV (251 aa)) enclose the Protein kinase domain. ATP contacts are provided by residues 99–107 (LGKGKFGNV) and Lys-122. Asp-216 functions as the Proton acceptor in the catalytic mechanism.

It belongs to the protein kinase superfamily. Ser/Thr protein kinase family. Aurora subfamily. As to quaternary structure, component of the CPC at least composed of survivin/birc5, incenp, cdca8/borealin and/or cdca9/dasra-A, and aurkb/aurora-B. Interacts directly (via N-terminus and kinase domain) with incenp (via C terminus), and may weakly interact (via N-terminus) with birc5.1 to stabilize the complex. Interacts with mtus1. Mg(2+) serves as cofactor. Phosphorylated, stimulates kinase activity.

It localises to the nucleus. The protein localises to the chromosome. It catalyses the reaction L-seryl-[protein] + ATP = O-phospho-L-seryl-[protein] + ADP + H(+). The enzyme catalyses L-threonyl-[protein] + ATP = O-phospho-L-threonyl-[protein] + ADP + H(+). Its activity is regulated as follows. Kinase activity is stimulated by both birc5/survivin-binding and cell-cycle specific phosphorylation. Its function is as follows. Serine/threonine-protein kinase component of the chromosomal passenger complex (CPC), a complex that acts as a key regulator of mitosis. The CPC complex has essential functions at the centromere in ensuring correct chromosome alignment and segregation and is required for chromatin-induced microtubule stabilization and spindle assembly. Involved in the bipolar attachment of spindle microtubules to kinetochores and is a key regulator for the onset of cytokinesis during mitosis. Required for central/midzone spindle assembly and cleavage furrow formation. Key component of the cytokinesis checkpoint, a process required to delay abscission to prevent both premature resolution of intercellular chromosome bridges and accumulation of DNA damage. Phosphorylates 'Ser-10' of histone H3 during mitosis. This Xenopus laevis (African clawed frog) protein is Aurora kinase B-A (aurkb-a).